Here is a 371-residue protein sequence, read N- to C-terminus: Large ribosomal subunit protein bL27m (371 aa).

A mitochondrion-targeting transit peptide spans 1-27 (MWNPILLDTSSFSFQKHVSGVFLQVRN).

The protein belongs to the bacterial ribosomal protein bL27 family. As to quaternary structure, component of the mitochondrial large ribosomal subunit (mt-LSU). Mature yeast 74S mitochondrial ribosomes consist of a small (37S) and a large (54S) subunit. The 37S small subunit contains a 15S ribosomal RNA (15S mt-rRNA) and 34 different proteins. The 54S large subunit contains a 21S rRNA (21S mt-rRNA) and 46 different proteins.

It localises to the mitochondrion. In terms of biological role, component of the mitochondrial ribosome (mitoribosome), a dedicated translation machinery responsible for the synthesis of mitochondrial genome-encoded proteins, including at least some of the essential transmembrane subunits of the mitochondrial respiratory chain. The mitoribosomes are attached to the mitochondrial inner membrane and translation products are cotranslationally integrated into the membrane. The polypeptide is Large ribosomal subunit protein bL27m (MRP7) (Saccharomyces cerevisiae (strain ATCC 204508 / S288c) (Baker's yeast)).